A 218-amino-acid polypeptide reads, in one-letter code: LexA repressor (218 aa).

Positions 28 to 48 (RAEIAAEFGFSSPNSAEEHLR) form a DNA-binding region, H-T-H motif. Residues serine 136 and lysine 173 each act as for autocatalytic cleavage activity in the active site.

The protein belongs to the peptidase S24 family. Homodimer.

The catalysed reaction is Hydrolysis of Ala-|-Gly bond in repressor LexA.. Functionally, represses a number of genes involved in the response to DNA damage (SOS response), including recA and lexA. In the presence of single-stranded DNA, RecA interacts with LexA causing an autocatalytic cleavage which disrupts the DNA-binding part of LexA, leading to derepression of the SOS regulon and eventually DNA repair. The polypeptide is LexA repressor (Cupriavidus metallidurans (strain ATCC 43123 / DSM 2839 / NBRC 102507 / CH34) (Ralstonia metallidurans)).